A 366-amino-acid polypeptide reads, in one-letter code: Ferredoxin--NADP reductase (366 aa).

7 residues coordinate FAD: aspartate 51, glutamine 59, tyrosine 64, valine 104, phenylalanine 139, aspartate 308, and threonine 349.

Belongs to the ferredoxin--NADP reductase type 2 family. In terms of assembly, homodimer. Requires FAD as cofactor.

The enzyme catalyses 2 reduced [2Fe-2S]-[ferredoxin] + NADP(+) + H(+) = 2 oxidized [2Fe-2S]-[ferredoxin] + NADPH. The polypeptide is Ferredoxin--NADP reductase (Methylibium petroleiphilum (strain ATCC BAA-1232 / LMG 22953 / PM1)).